A 216-amino-acid chain; its full sequence is Protein Syd (216 aa).

Belongs to the Syd family.

The protein localises to the cell inner membrane. Its function is as follows. Interacts with the SecY protein in vivo. May bind preferentially to an uncomplexed state of SecY, thus functioning either as a chelating agent for excess SecY in the cell or as a regulatory factor that negatively controls the translocase function. This Shewanella sp. (strain MR-4) protein is Protein Syd.